We begin with the raw amino-acid sequence, 367 residues long: Multifunctional tryptophan biosynthesis protein (367 aa).

The Glutamine amidotransferase type-1 domain maps to 7-201 (NVVMIDNYDS…LNVSGGYWEE (195 aa)). 58 to 60 (GPG) is an L-glutamine binding site. Cys-86 (nucleophile; for GATase activity) is an active-site residue. L-glutamine-binding positions include Gln-90 and 136–137 (SL). Catalysis depends on for GATase activity residues His-175 and Glu-177. The tract at residues 209 to 367 (RKESILEKIY…TVLLIVKMLS (159 aa)) is indole-3-glycerol phosphate synthase.

As to quaternary structure, tetramer of two components I and two components II.

It catalyses the reaction chorismate + L-glutamine = anthranilate + pyruvate + L-glutamate + H(+). It carries out the reaction 1-(2-carboxyphenylamino)-1-deoxy-D-ribulose 5-phosphate + H(+) = (1S,2R)-1-C-(indol-3-yl)glycerol 3-phosphate + CO2 + H2O. The protein operates within amino-acid biosynthesis; L-tryptophan biosynthesis; L-tryptophan from chorismate: step 1/5. Its pathway is amino-acid biosynthesis; L-tryptophan biosynthesis; L-tryptophan from chorismate: step 4/5. This chain is Multifunctional tryptophan biosynthesis protein, found in Pichia angusta (Yeast).